The primary structure comprises 472 residues: Eukaryotic translation initiation factor 2 subunit 3, Y-linked (472 aa).

The residue at position 2 (Ala2) is an N-acetylalanine. At Ser16 the chain carries Phosphoserine. The tr-type G domain maps to 39–247 (QATINIGTIG…YIVKKIPVPL (209 aa)). Positions 48-55 (GHVAHGKS) are G1. 51–56 (AHGKST) is a binding site for GTP. Residues 76-80 (NITIK) are G2. The G3 stretch occupies residues 134–137 (DCPG). GTP-binding positions include 190 to 193 (NKID) and 225 to 227 (SAQ). A G4 region spans residues 190–193 (NKID). Positions 225–227 (SAQ) are G5.

The protein belongs to the TRAFAC class translation factor GTPase superfamily. Classic translation factor GTPase family. EIF2G subfamily. EIF2 is a heterotrimer composed of an alpha (EIF2S1), a beta (EIF2S2) and a gamma (Eif2s3x and Eif2s3y) chain. eIF2 is member of the 43S pre-initiation complex (43S PIC). As to expression, widely expressed in males.

It carries out the reaction GTP + H2O = GDP + phosphate + H(+). Member of the eIF2 complex that functions in the early steps of protein synthesis by forming a ternary complex with GTP and initiator tRNA. This complex binds to a 40S ribosomal subunit, followed by mRNA binding to form the 43S pre-initiation complex (43S PIC). Junction of the 60S ribosomal subunit to form the 80S initiation complex is preceded by hydrolysis of the GTP bound to eIF2 and release of an eIF2-GDP binary complex. In order for eIF2 to recycle and catalyze another round of initiation, the GDP bound to eIF2 must exchange with GTP by way of a reaction catalyzed by eIF-2B. Along with its paralog on chromosome X, may contribute to spermatogenesis up to the round spermatid stage. This chain is Eukaryotic translation initiation factor 2 subunit 3, Y-linked (Eif2s3y), found in Rattus norvegicus (Rat).